We begin with the raw amino-acid sequence, 630 residues long: Pentatricopeptide repeat-containing protein At1g62670, mitochondrial (630 aa).

The transit peptide at 1 to 22 directs the protein to the mitochondrion; that stretch reads MRISFAIASTAKRFVHRSLVVR. PPR repeat units lie at residues 44–79, 80–114, 115–149, 150–184, 185–219, 220–254, 255–289, 290–324, 325–359, 360–394, 395–429, 430–464, 465–499, 500–534, 535–569, and 570–604; these read TSYD…RPFP, SIIE…GIPH, NHYT…GYEP, NIVT…GYQP, NTVT…GCQP, DLVT…KLEP, GVLI…GIRP, NVVT…KINP, DVFT…SIDP, SIVT…HCFP, DVVT…GLVG, NTVT…GVPP, NIMT…KMEP, TIYT…GVKP, DVVA…GTLP, and NSGC…GFAG.

The protein belongs to the PPR family. P subfamily.

The protein localises to the mitochondrion. The chain is Pentatricopeptide repeat-containing protein At1g62670, mitochondrial from Arabidopsis thaliana (Mouse-ear cress).